Consider the following 31-residue polypeptide: Relaxin B chain (31 aa).

Glutamine 1 is subject to Pyrrolidone carboxylic acid.

It belongs to the insulin family. Heterodimer of a B chain and an A chain linked by two disulfide bonds.

Its subcellular location is the secreted. Relaxin is an ovarian hormone that acts with estrogen to produce dilatation of the birth canal in many mammals. The polypeptide is Relaxin B chain (Phocoenoides dalli dalli (Dall's porpoise)).